Reading from the N-terminus, the 77-residue chain is Acyl carrier protein (77 aa).

The region spanning M1–N76 is the Carrier domain. S36 bears the O-(pantetheine 4'-phosphoryl)serine mark.

Belongs to the acyl carrier protein (ACP) family. 4'-phosphopantetheine is transferred from CoA to a specific serine of apo-ACP by AcpS. This modification is essential for activity because fatty acids are bound in thioester linkage to the sulfhydryl of the prosthetic group.

The protein localises to the cytoplasm. It participates in lipid metabolism; fatty acid biosynthesis. Functionally, carrier of the growing fatty acid chain in fatty acid biosynthesis. This chain is Acyl carrier protein, found in Actinobacillus pleuropneumoniae serotype 5b (strain L20).